An 80-amino-acid chain; its full sequence is Exodeoxyribonuclease 7 small subunit (80 aa).

It belongs to the XseB family. In terms of assembly, heterooligomer composed of large and small subunits.

The protein localises to the cytoplasm. It catalyses the reaction Exonucleolytic cleavage in either 5'- to 3'- or 3'- to 5'-direction to yield nucleoside 5'-phosphates.. In terms of biological role, bidirectionally degrades single-stranded DNA into large acid-insoluble oligonucleotides, which are then degraded further into small acid-soluble oligonucleotides. This Vibrio atlanticus (strain LGP32) (Vibrio splendidus (strain Mel32)) protein is Exodeoxyribonuclease 7 small subunit.